We begin with the raw amino-acid sequence, 264 residues long: MKQYLELMKKVLDEGTPKNDRTGTGTLSIFGHQMRFNLQEGFPLVTTKRCHLRSIIHELLWFLQGDTNVAYLRENNVSIWDEWADENGNLGPVYGHQWRAWPTPDGRHIDQITTVLNQLKNDPDSRRIIVSAWNVGELDKMALAPCHAFFQFYVADGKLSCQLYQRSCDVFLGLPFNIASYALLVHMMAQQCDLEVGDFVWTGGDTHLYSNHMEQTHLQLTREPRALPKLVIKRKPESIFDYRFEDFEIEGYDPHPGIKAPVAI.

DUMP is bound at residue arginine 21. Histidine 51 is a (6R)-5,10-methylene-5,6,7,8-tetrahydrofolate binding site. Position 126–127 (126–127 (RR)) interacts with dUMP. Catalysis depends on cysteine 146, which acts as the Nucleophile. DUMP is bound by residues 166–169 (RSCD), asparagine 177, and 207–209 (HLY). Position 169 (aspartate 169) interacts with (6R)-5,10-methylene-5,6,7,8-tetrahydrofolate. Alanine 263 provides a ligand contact to (6R)-5,10-methylene-5,6,7,8-tetrahydrofolate.

It belongs to the thymidylate synthase family. Bacterial-type ThyA subfamily. Homodimer.

The protein localises to the cytoplasm. The enzyme catalyses dUMP + (6R)-5,10-methylene-5,6,7,8-tetrahydrofolate = 7,8-dihydrofolate + dTMP. It participates in pyrimidine metabolism; dTTP biosynthesis. Functionally, catalyzes the reductive methylation of 2'-deoxyuridine-5'-monophosphate (dUMP) to 2'-deoxythymidine-5'-monophosphate (dTMP) while utilizing 5,10-methylenetetrahydrofolate (mTHF) as the methyl donor and reductant in the reaction, yielding dihydrofolate (DHF) as a by-product. This enzymatic reaction provides an intracellular de novo source of dTMP, an essential precursor for DNA biosynthesis. In Enterobacter sp. (strain 638), this protein is Thymidylate synthase.